Consider the following 706-residue polypeptide: Catalase HPII (706 aa).

Active-site residues include His-77 and Asn-151. Residue Tyr-365 participates in heme binding. The interval 512–532 is disordered; sequence EPPEEQVDESAPVSPALSQVT.

The protein belongs to the catalase family. HPII subfamily. Heme serves as cofactor.

Its subcellular location is the cytoplasm. The catalysed reaction is 2 H2O2 = O2 + 2 H2O. Decomposes hydrogen peroxide into water and oxygen; serves to protect cells from the toxic effects of hydrogen peroxide. This Mycobacterium avium protein is Catalase HPII (katE).